Here is a 414-residue protein sequence, read N- to C-terminus: Serine-type anaerobic sulfatase-maturating enzyme (414 aa).

One can recognise a Radical SAM core domain in the interval 5–250; the sequence is TYAPFAKPLY…LCTIFDEWVK (246 aa). [4Fe-4S] cluster is bound by residues C24 and C28. S-adenosyl-L-methionine is bound at residue Y30. [4Fe-4S] cluster is bound at residue C31. Residues G76, S131, and R143 each contribute to the S-adenosyl-L-methionine site. Residues C276, C282, and C297 each contribute to the [4Fe-4S] cluster site. The Proton acceptor role is filled by D298. C339, C342, C348, C352, and C371 together coordinate [4Fe-4S] cluster.

Belongs to the radical SAM superfamily. Anaerobic sulfatase-maturating enzyme family. [4Fe-4S] cluster serves as cofactor.

It carries out the reaction L-seryl-[sulfatase] + S-adenosyl-L-methionine = 3-oxo-L-alanyl-[sulfatase] + 5'-deoxyadenosine + L-methionine + H(+). It functions in the pathway protein modification; sulfatase oxidation. Involved in 'Ser-type' sulfatase maturation under anaerobic conditions. Links the heparin and the chondroitin sulfate utilization pathways which contribute to the colonization of the intestinal tract. May catalyze the activation of chondro-6-sulfatase, i.e. the post-translational modification of a specific serine residue into 3-oxoalanine (also known as C(alpha)-formylglycine (FGly)), by a free radical chemical mechanism initiated via the reductive cleavage of S-adenosyl-L-methionine (SAM). Is also able to oxidize a cysteine residue in a synthetic substrate to FGly in vitro, but not in a recombinant Cys-type sulfatase in vivo. But since B.thetaiotaomicron possesses only Ser-type sulfatases, the oxidation of serine residues to FGly is the sole physiological activity. This Bacteroides thetaiotaomicron (strain ATCC 29148 / DSM 2079 / JCM 5827 / CCUG 10774 / NCTC 10582 / VPI-5482 / E50) protein is Serine-type anaerobic sulfatase-maturating enzyme (chuR).